Here is a 231-residue protein sequence, read N- to C-terminus: Cytochrome c oxidase assembly factor 7 (231 aa).

5 Sel1-like repeats span residues 34 to 66, 68 to 104, 108 to 145, 146 to 182, and 183 to 218; these read PDGCNRLAEYLENIKKNFESAAQILKINCDQNE, SESCYKLGAYYVTGKGGLPVDLKAAYGCFLKSCNKGG, IDSCHNVGLLSHDGRVNDDKPDALKARDYYNKACDGNF, AASCFNLSAIYLQGAPGIPKDMNMALHFSEKACSLGH, and MWGCANASRMYKLGDGVAKNDEKAESLKNKARDLHR.

Belongs to the hcp beta-lactamase family.

Its subcellular location is the mitochondrion intermembrane space. Its function is as follows. May be required for assembly of mitochondrial respiratory chain complexes. This chain is Cytochrome c oxidase assembly factor 7 (coa7), found in Xenopus tropicalis (Western clawed frog).